The chain runs to 437 residues: GTPase Der (437 aa).

EngA-type G domains lie at 3–168 (PLIA…PCPE) and 178–353 (IKLA…LNRR). Residues 9-16 (GRPNVGKS), 56-60 (DTGGY), 120-123 (NKVD), 184-191 (GRPNVGKS), 231-235 (DTAGL), and 296-299 (NKWD) each bind GTP. A KH-like domain is found at 354-437 (QKISTSNLNR…IPITMRFLRK (84 aa)).

It belongs to the TRAFAC class TrmE-Era-EngA-EngB-Septin-like GTPase superfamily. EngA (Der) GTPase family. In terms of assembly, associates with the 50S ribosomal subunit.

Functionally, GTPase that plays an essential role in the late steps of ribosome biogenesis. This Chlorobaculum tepidum (strain ATCC 49652 / DSM 12025 / NBRC 103806 / TLS) (Chlorobium tepidum) protein is GTPase Der.